The primary structure comprises 403 residues: uncharacterized protein (403 aa).

The first 26 residues, 1-26 (MYKFKTNLFLVIYFIAIFSIESSISS), serve as a signal peptide directing secretion. Residues 27–381 (FNTEINSNSN…DSDNSSFGIS (355 aa)) are Extracellular-facing. 7 N-linked (GlcNAc...) asparagine glycosylation sites follow: Asn-58, Asn-90, Asn-93, Asn-124, Asn-137, Asn-371, and Asn-375. Residues 382–402 (IQKYLNSFLNSFIIILIINII) form a helical membrane-spanning segment. Residue Ile-403 is a topological domain, cytoplasmic.

It localises to the membrane. This is an uncharacterized protein from Dictyostelium discoideum (Social amoeba).